The chain runs to 359 residues: Phosphoserine aminotransferase (359 aa).

Arg-42 contacts L-glutamate. Pyridoxal 5'-phosphate contacts are provided by residues 76–77, Trp-102, Thr-152, Asp-171, and Gln-194; that span reads AS. Position 195 is an N6-(pyridoxal phosphate)lysine (Lys-195). Pyridoxal 5'-phosphate is bound at residue 236–237; that stretch reads NT.

This sequence belongs to the class-V pyridoxal-phosphate-dependent aminotransferase family. SerC subfamily. In terms of assembly, homodimer. Pyridoxal 5'-phosphate serves as cofactor.

The protein localises to the cytoplasm. The enzyme catalyses O-phospho-L-serine + 2-oxoglutarate = 3-phosphooxypyruvate + L-glutamate. The catalysed reaction is 4-(phosphooxy)-L-threonine + 2-oxoglutarate = (R)-3-hydroxy-2-oxo-4-phosphooxybutanoate + L-glutamate. The protein operates within amino-acid biosynthesis; L-serine biosynthesis; L-serine from 3-phospho-D-glycerate: step 2/3. Its pathway is cofactor biosynthesis; pyridoxine 5'-phosphate biosynthesis; pyridoxine 5'-phosphate from D-erythrose 4-phosphate: step 3/5. Catalyzes the reversible conversion of 3-phosphohydroxypyruvate to phosphoserine and of 3-hydroxy-2-oxo-4-phosphonooxybutanoate to phosphohydroxythreonine. In Vesicomyosocius okutanii subsp. Calyptogena okutanii (strain HA), this protein is Phosphoserine aminotransferase.